Consider the following 403-residue polypeptide: Non-structural maintenance of chromosomes element 4 homolog A (403 aa).

Residues 1 to 45 are compositionally biased toward basic and acidic residues; sequence MRKTVKRESEATGGKREADDEPEKLRSVKKEKQRKTEADSVRPDE. Disordered regions lie at residues 1–57, 194–226, and 342–403; these read MRKT…QGIS, LKQR…EEKT, and SSCP…LTSS. Positions 196-206 are enriched in basic residues; sequence QRKRAPNRKRT. Low complexity predominate over residues 342–353; that stretch reads SSCPAASAPASA. The span at 354–363 shows a compositional bias: polar residues; the sequence is DFTQDTQTTP. Residues 384–393 show a composition bias toward basic and acidic residues; the sequence is TPDKEGDGTR. The span at 394-403 shows a compositional bias: basic residues; sequence RRCKRRLTSS.

This sequence belongs to the NSE4 family. Interacts with SMC5, SMC6A or SMC6B. The SMC5-SMC6 complex is composed of the SMC5 and SMC6 heterodimer attached via their hinge domain and from the non-SMC subunit NSE4A or NSE4B. In terms of tissue distribution, expressed in seedlings, rosette leaves and floral buds.

It localises to the nucleus. Functionally, component of the SMC5-SMC6 complex, that promotes sister chromatid alignment after DNA damage and facilitates double-stranded DNA breaks (DSBs) repair via homologous recombination between sister chromatids. This is Non-structural maintenance of chromosomes element 4 homolog A (NSE4A) from Arabidopsis thaliana (Mouse-ear cress).